Here is a 1358-residue protein sequence, read N- to C-terminus: Tenascin-R (1358 aa).

A signal peptide spans 1 to 31 (MGADGETVVLKNMLIGINLILLGSMIKPSEC). O-linked (GalNAc...) threonine glycans are attached at residues T36 and T37. A glycan (N-linked (GlcNAc...) asparagine) is linked at N55. Residues 127 to 157 (CASSAQVLQELLSRIEMLEREVSVLRDQCNA) adopt a coiled-coil conformation. The O-linked (Xyl...) (chondroitin sulfate) serine glycan is linked to S176. Residues N180 and N198 are each glycosylated (N-linked (GlcNAc...) asparagine). 3 EGF-like domains span residues 188–199 (CICNEGWFGKNC), 219–230 (CICDSEYSGDDC), and 250–261 (CVCEEPYTGEDC). The O-linked (Xyl...) (chondroitin sulfate) serine glycan is linked to S271. N-linked (GlcNAc...) asparagine glycosylation occurs at N278. The 12-residue stretch at 281 to 292 (CLCEEGYVGEDC) folds into the EGF-like 4 domain. Disulfide bonds link C292/C301, C297/C312, and C314/C323. O-linked (Xyl...) (chondroitin sulfate) serine glycosylation is present at S302. Residues 312 to 323 (CVCEEGYQGPDC) form the EGF-like 5 domain. 9 consecutive Fibronectin type-III domains span residues 328–420 (PPED…TPQG), 421–505 (LQFK…TVID), 506–595 (GPTQ…TEID), 596–687 (APKN…TELD), 688–777 (SPRD…FRPI), 778–865 (SHLH…TGID), 866–955 (PPKD…AMDN), 956–1042 (PVDL…TLLD), and 1043–1130 (PPAN…TGGR). 3 N-linked (GlcNAc...) asparagine glycosylation sites follow: N392, N470, and N581. At S724 the chain carries Phosphoserine. N791, N874, N1036, N1046, and N1261 each carry an N-linked (GlcNAc...) asparagine glycan. One can recognise a Fibrinogen C-terminal domain in the interval 1129–1344 (GRVFPHPQDC…FVEMKMRPYN (216 aa)).

This sequence belongs to the tenascin family. As to quaternary structure, forms oligomers. Interacts with CNTN1, TNC, and FN1. Interacts with BCAN and ACAN in a calcium-dependent manner. Interacts with SCN2B, PTPRZ1, and CSPG3. Post-translationally, contains N-linked oligosaccharides, O-linked sialylated structures and O-linked chondroitin sulfate glycosaminoglycans. Contains N-linked oligosaccharides with a sulfated carbohydrate structure. O-glycosylated on Thr-36 or Thr-37 with a core 1 or possibly core 8 glycan. Brain specific.

The protein resides in the secreted. It is found in the extracellular space. It localises to the extracellular matrix. Functionally, neural extracellular matrix (ECM) protein involved in interactions with different cells and matrix components. These interactions can influence cellular behavior by either evoking a stable adhesion and differentiation, or repulsion and inhibition of neurite growth. Binding to cell surface gangliosides inhibits RGD-dependent integrin-mediated cell adhesion and results in an inhibition of PTK2/FAK1 (FAK) phosphorylation and cell detachment. Binding to membrane surface sulfatides results in a oligodendrocyte adhesion and differentiation. Interaction with CNTN1 induces a repulsion of neurons and an inhibition of neurite outgrowth. Interacts with SCN2B may play a crucial role in clustering and regulation of activity of sodium channels at nodes of Ranvier. TNR-linked chondroitin sulfate glycosaminoglycans are involved in the interaction with FN1 and mediate inhibition of cell adhesion and neurite outgrowth. The highly regulated addition of sulfated carbohydrate structure may modulate the adhesive properties of TNR over the course of development and during synapse maintenance. The chain is Tenascin-R (TNR) from Homo sapiens (Human).